The sequence spans 227 residues: MSNPILEMRGITKSYNAGQANAVTVLRGVDLRIAKGEVVALVAPSGAGKSTLLHIAGLLDEADTGQVLIEGEEMRGLSDARRTAIRRSDVGFIYQFHHLLPEFNAAENIILPQLANGVSKAAAAERAAGLLSAVGIASRAAHRPGALSGGEQQRVAFCRALANAPKMLLADEPTGNLDPGTSDQVFDALMNLVRDTGLSALIATHNLALAARMDRQIRLDAGQLSDV.

The ABC transporter domain maps to 6–227 (LEMRGITKSY…RLDAGQLSDV (222 aa)). Residue 43-50 (APSGAGKS) coordinates ATP.

It belongs to the ABC transporter superfamily. Lipoprotein translocase (TC 3.A.1.125) family. The complex is composed of two ATP-binding proteins (LolD) and two transmembrane proteins (LolC and LolE).

Its subcellular location is the cell inner membrane. Functionally, part of the ABC transporter complex LolCDE involved in the translocation of mature outer membrane-directed lipoproteins, from the inner membrane to the periplasmic chaperone, LolA. Responsible for the formation of the LolA-lipoprotein complex in an ATP-dependent manner. The protein is Lipoprotein-releasing system ATP-binding protein LolD of Roseobacter denitrificans (strain ATCC 33942 / OCh 114) (Erythrobacter sp. (strain OCh 114)).